The primary structure comprises 98 residues: Large ribosomal subunit protein uL23 (98 aa).

It belongs to the universal ribosomal protein uL23 family. In terms of assembly, part of the 50S ribosomal subunit. Contacts protein L29, and trigger factor when it is bound to the ribosome.

Functionally, one of the early assembly proteins it binds 23S rRNA. One of the proteins that surrounds the polypeptide exit tunnel on the outside of the ribosome. Forms the main docking site for trigger factor binding to the ribosome. In Thioalkalivibrio sulfidiphilus (strain HL-EbGR7), this protein is Large ribosomal subunit protein uL23.